We begin with the raw amino-acid sequence, 115 residues long: DNA-directed RNA polymerase subunit Rpo4 (115 aa).

Belongs to the eukaryotic RPB4 RNA polymerase subunit family. As to quaternary structure, part of the RNA polymerase complex. Forms a stalk with Rpo7 that extends from the main structure.

It is found in the cytoplasm. The enzyme catalyses RNA(n) + a ribonucleoside 5'-triphosphate = RNA(n+1) + diphosphate. Its function is as follows. DNA-dependent RNA polymerase (RNAP) catalyzes the transcription of DNA into RNA using the four ribonucleoside triphosphates as substrates. This subunit is less well bound than the others. The sequence is that of DNA-directed RNA polymerase subunit Rpo4 from Methanocaldococcus jannaschii (strain ATCC 43067 / DSM 2661 / JAL-1 / JCM 10045 / NBRC 100440) (Methanococcus jannaschii).